The chain runs to 43 residues: Large ribosomal subunit protein uL5 (43 aa).

This sequence belongs to the universal ribosomal protein uL5 family. Part of the 50S ribosomal subunit; part of the 5S rRNA/L5/L18/L25 subcomplex. Contacts the 5S rRNA and the P site tRNA. Forms a bridge to the 30S subunit in the 70S ribosome.

This is one of the proteins that bind and probably mediate the attachment of the 5S RNA into the large ribosomal subunit, where it forms part of the central protuberance. In the 70S ribosome it contacts protein S13 of the 30S subunit (bridge B1b), connecting the 2 subunits; this bridge is implicated in subunit movement. Contacts the P site tRNA; the 5S rRNA and some of its associated proteins might help stabilize positioning of ribosome-bound tRNAs. The protein is Large ribosomal subunit protein uL5 (rplE) of Serratia marcescens.